A 511-amino-acid chain; its full sequence is MEKFEGYSEKHKSRQQYFVYPLLFQEYIYAFAHDYGLNGSEPVEIVSCNNKKFSSLLVKRLIIRMYQQNFLDNSVNNPNQDRLLDYKNYFYSEFYSQILSEGFAIVVEIPFSLRELSCPKEKEIPKFQNLRSIHSIFPFLEDKFLHLDYLSHIEIPYPIHLEILVQLLQYRIQDVPSLHLLRFFLNYYSNWNSFITSMKSIFYFQKENKRLFKFLYNSYVSEYEFFLLFLRKQSSCLPLASSGTFLERIHFSRKMEHFGIMYPGFSRKTLWFFMDPLMHYVRYQGKAILASKGSFFLKKKWKCYLINFWQYYFFFWTQPRRIHINQLANSCFDFMGYLSSVPKSPLLVRNQMLENSFLIDTRMKKFDTIVPATLLIGYLSKAQFCTGSGHPISKPIWTDLSDWDILDRFGRICRNLFHYHSGSSKKRTLYRLKYILRLSCARTLARKHKSTVRTFMQRLGSAFLEEFFTEEEQVFSLMFTKTTLFSFCGSHTERIWYLDIIRINDLVNPLN.

The protein belongs to the intron maturase 2 family. MatK subfamily.

It is found in the plastid. Its subcellular location is the chloroplast. Usually encoded in the trnK tRNA gene intron. Probably assists in splicing its own and other chloroplast group II introns. In Hordeum jubatum (Foxtail barley), this protein is Maturase K.